The sequence spans 478 residues: Long-chain acyl-protein thioester reductase 2 (478 aa).

Belongs to the LuxC family.

It carries out the reaction a long-chain fatty aldehyde + NADP(+) + CoA = a long-chain fatty acyl-CoA + NADPH + H(+). It participates in lipid metabolism; fatty acid reduction for biolumincescence. In terms of biological role, luxC is the fatty acid reductase enzyme responsible for synthesis of the aldehyde substrate for the luminescent reaction catalyzed by luciferase. The sequence is that of Long-chain acyl-protein thioester reductase 2 (luxC) from Photobacterium leiognathi.